The primary structure comprises 184 residues: Ras-related protein RabN2 (184 aa).

Position 3–10 (3–10 (GDYRSGKT)) interacts with GTP. The Effector region motif lies at 25–32 (TNPSTFDY). GTP is bound by residues 50–54 (DTAGH) and 117–120 (TKSD).

Belongs to the small GTPase superfamily. Rab family.

This Dictyostelium discoideum (Social amoeba) protein is Ras-related protein RabN2 (rabN2).